The chain runs to 156 residues: ATP synthase subunit b (156 aa).

The chain crosses the membrane as a helical span at residues 5–25 (VTLIGQTVAFIIFVWFCMKFV).

This sequence belongs to the ATPase B chain family. As to quaternary structure, F-type ATPases have 2 components, F(1) - the catalytic core - and F(0) - the membrane proton channel. F(1) has five subunits: alpha(3), beta(3), gamma(1), delta(1), epsilon(1). F(0) has three main subunits: a(1), b(2) and c(10-14). The alpha and beta chains form an alternating ring which encloses part of the gamma chain. F(1) is attached to F(0) by a central stalk formed by the gamma and epsilon chains, while a peripheral stalk is formed by the delta and b chains.

It localises to the cell inner membrane. Functionally, f(1)F(0) ATP synthase produces ATP from ADP in the presence of a proton or sodium gradient. F-type ATPases consist of two structural domains, F(1) containing the extramembraneous catalytic core and F(0) containing the membrane proton channel, linked together by a central stalk and a peripheral stalk. During catalysis, ATP synthesis in the catalytic domain of F(1) is coupled via a rotary mechanism of the central stalk subunits to proton translocation. In terms of biological role, component of the F(0) channel, it forms part of the peripheral stalk, linking F(1) to F(0). This Shewanella loihica (strain ATCC BAA-1088 / PV-4) protein is ATP synthase subunit b.